We begin with the raw amino-acid sequence, 218 residues long: Small ribosomal subunit protein uS3 (218 aa).

Residues 38-106 (IRTFLKKKLY…KLVVDIKEVK (69 aa)) enclose the KH type-2 domain.

This sequence belongs to the universal ribosomal protein uS3 family. As to quaternary structure, part of the 30S ribosomal subunit. Forms a tight complex with proteins S10 and S14.

Functionally, binds the lower part of the 30S subunit head. Binds mRNA in the 70S ribosome, positioning it for translation. The chain is Small ribosomal subunit protein uS3 from Agathobacter rectalis (strain ATCC 33656 / DSM 3377 / JCM 17463 / KCTC 5835 / VPI 0990) (Eubacterium rectale).